Reading from the N-terminus, the 359-residue chain is Putative nucleotidyltransferase MAB21L1 (359 aa).

A ribonucleoside 5'-triphosphate-binding positions include 23 to 24 (RK) and 63 to 66 (FEGL). Residues Glu-73 and Glu-75 each contribute to the Mg(2+) site. Residues Lys-248 and 252–255 (SLLK) each bind a ribonucleoside 5'-triphosphate.

This sequence belongs to the mab-21 family. Monomer. Homodecamer; composed of 2 back to back homopentamers. The protein may exist as monomer in solution and oiligomerizes upon ligand binding.

Its subcellular location is the nucleus. Putative nucleotidyltransferase required for several aspects of embryonic development including normal development of the eye. It is unclear whether it displays nucleotidyltransferase activity in vivo. Binds single-stranded RNA (ssRNA). The sequence is that of Putative nucleotidyltransferase MAB21L1 (mab21l1) from Danio rerio (Zebrafish).